The following is a 179-amino-acid chain: Large ribosomal subunit protein uL6 (179 aa).

The protein belongs to the universal ribosomal protein uL6 family. In terms of assembly, part of the 50S ribosomal subunit.

Its function is as follows. This protein binds to the 23S rRNA, and is important in its secondary structure. It is located near the subunit interface in the base of the L7/L12 stalk, and near the tRNA binding site of the peptidyltransferase center. The sequence is that of Large ribosomal subunit protein uL6 from Metamycoplasma arthritidis (strain 158L3-1) (Mycoplasma arthritidis).